A 273-amino-acid polypeptide reads, in one-letter code: Ribosomal RNA small subunit methyltransferase A (273 aa).

6 residues coordinate S-adenosyl-L-methionine: asparagine 19, leucine 21, glycine 46, glutamate 71, aspartate 94, and asparagine 117.

Belongs to the class I-like SAM-binding methyltransferase superfamily. rRNA adenine N(6)-methyltransferase family. RsmA subfamily.

The protein localises to the cytoplasm. It carries out the reaction adenosine(1518)/adenosine(1519) in 16S rRNA + 4 S-adenosyl-L-methionine = N(6)-dimethyladenosine(1518)/N(6)-dimethyladenosine(1519) in 16S rRNA + 4 S-adenosyl-L-homocysteine + 4 H(+). Specifically dimethylates two adjacent adenosines (A1518 and A1519) in the loop of a conserved hairpin near the 3'-end of 16S rRNA in the 30S particle. May play a critical role in biogenesis of 30S subunits. The chain is Ribosomal RNA small subunit methyltransferase A from Burkholderia ambifaria (strain MC40-6).